The following is a 231-amino-acid chain: Large ribosomal subunit protein uL1 (231 aa).

The protein belongs to the universal ribosomal protein uL1 family. In terms of assembly, part of the 50S ribosomal subunit.

Its function is as follows. Binds directly to 23S rRNA. The L1 stalk is quite mobile in the ribosome, and is involved in E site tRNA release. Protein L1 is also a translational repressor protein, it controls the translation of the L11 operon by binding to its mRNA. The sequence is that of Large ribosomal subunit protein uL1 from Caldanaerobacter subterraneus subsp. tengcongensis (strain DSM 15242 / JCM 11007 / NBRC 100824 / MB4) (Thermoanaerobacter tengcongensis).